Consider the following 215-residue polypeptide: Penicillin-binding protein activator LpoB (215 aa).

Residues 1–19 form the signal peptide; that stretch reads MMKMCRYALITALAIFLAG. The N-palmitoyl cysteine moiety is linked to residue Cys20. Cys20 carries S-diacylglycerol cysteine lipidation. The interval 28-78 is disordered; the sequence is APVEEAKPQPQQPAQPQPTVPTVPAVPSVPAQPGPIEHQDQQSGQPAPRVR. The span at 37–48 shows a compositional bias: pro residues; it reads PQQPAQPQPTVP. The span at 49 to 58 shows a compositional bias: low complexity; it reads TVPAVPSVPA.

This sequence belongs to the LpoB family. As to quaternary structure, interacts with PBP1b.

The protein localises to the cell outer membrane. In terms of biological role, regulator of peptidoglycan synthesis that is essential for the function of penicillin-binding protein 1B (PBP1b). This chain is Penicillin-binding protein activator LpoB, found in Klebsiella pneumoniae subsp. pneumoniae (strain ATCC 700721 / MGH 78578).